The sequence spans 761 residues: Ribonucleoside-diphosphate reductase 1 subunit alpha (761 aa).

An ATP-cone domain is found at 5–95; sequence LLVTKRDGRT…IFHLRKKAFG (91 aa). Residues Lys-9, 15–21, Thr-55, and Lys-91 each bind ATP; that span reads ERINLDK. Thr-209 provides a ligand contact to GDP. Residues Cys-225 and Cys-462 are joined by a disulfide bond. DTTP-binding positions include 232–234, Arg-262, and Arg-269; that span reads DSL. Asn-437 is a GDP binding site. Catalysis depends on Asn-437, which acts as the Proton acceptor. The Cysteine radical intermediate role is filled by Cys-439. GDP contacts are provided by residues Glu-441 and 623 to 625; that span reads ETS. Residue Glu-441 is the Proton acceptor of the active site.

This sequence belongs to the ribonucleoside diphosphate reductase large chain family. In terms of assembly, tetramer of two alpha (R1) and two beta (R2) subunits. The B1 protein is a dimer of alpha subunits. A radical transfer pathway occurs between 'Tyr-122' of R2 and R1.

The catalysed reaction is a 2'-deoxyribonucleoside 5'-diphosphate + [thioredoxin]-disulfide + H2O = a ribonucleoside 5'-diphosphate + [thioredoxin]-dithiol. Its activity is regulated as follows. Under complex allosteric control mediated by deoxynucleoside triphosphates and ATP binding to separate specificity and activation sites on the alpha subunit. The type of nucleotide bound at the specificity site determines substrate preference. It seems probable that ATP makes the enzyme reduce CDP and UDP, dGTP favors ADP reduction and dTTP favors GDP reduction. Stimulated by ATP and inhibited by dATP binding to the activity site. Its function is as follows. Provides the precursors necessary for DNA synthesis. Catalyzes the biosynthesis of deoxyribonucleotides from the corresponding ribonucleotides. R1 contains the binding sites for both substrates and allosteric effectors and carries out the actual reduction of the ribonucleotide. The sequence is that of Ribonucleoside-diphosphate reductase 1 subunit alpha (nrdA) from Salmonella typhimurium (strain LT2 / SGSC1412 / ATCC 700720).